A 349-amino-acid chain; its full sequence is Trans-enoyl reductase phmE (349 aa).

Residue 55 to 58 (CDWK) participates in NADP(+) binding. 143-150 (TGIGTMGL) contacts substrate. NADP(+)-binding positions include 182 to 185 (SPKN), tyrosine 200, and 247 to 248 (LE). 267–271 (GMAIL) lines the substrate pocket. 336 to 337 (VS) contacts NADP(+).

The protein belongs to the zinc-containing alcohol dehydrogenase family. In terms of assembly, monomer.

Its pathway is mycotoxin biosynthesis. Functionally, trans-enoyl reductase; part of the gene cluster that mediates the biosynthesis of the mycotoxins phomacins, leucine-derived cytochalasans with potent actin polymerization-inhibitory activities and monocot-specific antigerminative activities. The first step in the pathway is catalyzed by the hybrid PKS-NRPS phmA, assisted by the enoyl reductase phmE, that are responsible for fusion of the leucine precursor and the polyketide backbone to produce a 2-pyrrolidone intermediate. The polyketide synthase module (PKS) of phmA is responsible for the synthesis of the polyketide backbone and the downstream nonribosomal peptide synthetase (NRPS) amidates the carboxyl end of the polyketide with the leucine precursor. Because phmA lacks a designated enoylreductase (ER) domain, the required activity is provided the enoyl reductase phmE. Reduction by the hydrolyase phmG, followed by dehydration and intra-molecular Diels-Alder cyclization by the Diels-Alderase phmD then yield the required isoindolone-fused macrocycle. A number of oxidative steps catalyzed by the tailoring cytochrome P450 monooxygenase phmB, the FAD-linked oxidoreductase phmC and the short-chain dehydrogenase/reductase phmF, are further required to afford the final products, phomacin D and phomacin E. This chain is Trans-enoyl reductase phmE, found in Phaeosphaeria nodorum (strain SN15 / ATCC MYA-4574 / FGSC 10173) (Glume blotch fungus).